The following is a 155-amino-acid chain: Small ribosomal subunit protein uS9 (155 aa).

Belongs to the universal ribosomal protein uS9 family.

This Sinorhizobium medicae (strain WSM419) (Ensifer medicae) protein is Small ribosomal subunit protein uS9.